A 580-amino-acid chain; its full sequence is CDKN2A-interacting protein (580 aa).

At Ala-2 the chain carries N-acetylalanine. The XRN2-binding (XTBD) domain maps to 19 to 133 (VEALRCDGET…KVKKRGISSS (115 aa)). The segment at 129–356 (GISSSNEGVE…PKSSSSTNTS (228 aa)) is disordered. A Phosphoserine modification is found at Ser-131. Over residues 155–167 (EQDHAKTSAKTER) the composition is skewed to basic and acidic residues. Over residues 168 to 179 (ASAQQENSSTCI) the composition is skewed to polar residues. Lys-184 participates in a covalent cross-link: Glycyl lysine isopeptide (Lys-Gly) (interchain with G-Cter in SUMO1). A compositionally biased stretch (low complexity) spans 185–228 (SESGNSARSSGISSQNSSTSDGDRSVSSQSSSSVSSQVTTAGSG). Basic and acidic residues predominate over residues 231–240 (SEAEAPDKHG). The residue at position 241 (Ser-241) is a Phosphoserine. Over residues 248 to 269 (LKSSVNSHMTQSTDSRQQSGSP) the composition is skewed to polar residues. Composition is skewed to low complexity over residues 274-313 (LEGSSASASQSSSEIEVPLLGSSGSSEVELPLLSSKPSSE) and 321-356 (SKTSSEASVSSSVAKNSSSSGTSLLTPKSSSSTNTS). Phosphothreonine is present on Thr-346. The residue at position 389 (Ser-389) is a Phosphoserine. The DRBM domain occupies 462 to 537 (NHGELLNAAI…SREALKLFLK (76 aa)).

This sequence belongs to the CARF family. As to quaternary structure, interacts with CDKN2A/p14ARF, p53/TP53 and MDM2. Interacts with CHEK2 and MAPK3. Interacts with XRN2. May be ubiquitinated. As to expression, ubiquitously expressed.

It localises to the nucleus. The protein resides in the nucleoplasm. In terms of biological role, regulates DNA damage response in a dose-dependent manner through a number of signaling pathways involved in cell proliferation, apoptosis and senescence. The chain is CDKN2A-interacting protein (CDKN2AIP) from Homo sapiens (Human).